We begin with the raw amino-acid sequence, 190 residues long: dCTP deaminase, dUMP-forming (190 aa).

DCTP-binding positions include Lys-101–Arg-106, Asp-119, Thr-127–Glu-129, Gln-148, Tyr-162, and Gln-174. The Proton donor/acceptor role is filled by Glu-129. Residues Gly-163 to Thr-190 are disordered. Polar residues predominate over residues Tyr-171 to Thr-190.

Belongs to the dCTP deaminase family. Homotrimer.

The enzyme catalyses dCTP + 2 H2O = dUMP + NH4(+) + diphosphate. Its pathway is pyrimidine metabolism; dUMP biosynthesis; dUMP from dCTP: step 1/1. Bifunctional enzyme that catalyzes both the deamination of dCTP to dUTP and the hydrolysis of dUTP to dUMP without releasing the toxic dUTP intermediate. The polypeptide is dCTP deaminase, dUMP-forming (Mycolicibacterium paratuberculosis (strain ATCC BAA-968 / K-10) (Mycobacterium paratuberculosis)).